Here is a 430-residue protein sequence, read N- to C-terminus: Potassium channel subfamily K member 12 (430 aa).

Residues 1 to 38 (MSSRSPRPPPRRCRRRLPRPSCCCCCCRRSHLNEDTGR) lie on the Cytoplasmic side of the membrane. The tract at residues 11 to 16 (RRCRRR) is ER retention/retrieval signal. A helical transmembrane segment spans residues 39–59 (FVLLAALIGLYLVAGATVFSA). A glycan (N-linked (GlcNAc...) asparagine) is linked at asparagine 78. Residues 114-134 (WDFPGAFYFVGTVVSTIGFGM) constitute an intramembrane region (pore-forming). Residues threonine 129, isoleucine 130, and glycine 131 each coordinate K(+). Residues 129–134 (TIGFGM) are selectivity filter 1. Residues 145–165 (FLIAYGLFGCAGTILFFNLFL) traverse the membrane as a helical segment. Over 166–212 (ERIISLLAFIMRACRERQLRRSGLLPATFRRGSALSEADSLAGWKPS) the chain is Cytoplasmic. The chain crosses the membrane as a helical span at residues 213-233 (VYHVLLILGLFAVLLACCASA). Residues 243–263 (YVDSLYFCFVTFSTIGFGDLV) constitute an intramembrane region (pore-forming). Threonine 256, isoleucine 257, glycine 258, and phenylalanine 259 together coordinate K(+). The interval 256–261 (TIGFGD) is selectivity filter 2. A helical membrane pass occupies residues 282–302 (LFILLGVCCIYSLFNVISILI). Over 303-430 (KQVLNWMLRK…NRLAETSASR (128 aa)) the chain is Cytoplasmic.

The protein belongs to the two pore domain potassium channel (TC 1.A.1.8) family. In terms of assembly, homodimer. Heterodimer with KCNK13. As to expression, highly expressed in most brain regions. Also expressed in other tissues such as lung, kidney, liver, stomach and spleen.

It localises to the cell membrane. Its subcellular location is the endoplasmic reticulum membrane. It catalyses the reaction K(+)(in) = K(+)(out). Its function is as follows. K(+) channel subunit that may homo- and heterodimerize to form functional channels with distinct regulatory and gating properties. Can heterodimerize with KCNK13 subunit to conduct K(+) outward rectifying currents at the plasma membrane. The homodimers are mainly retained in the endoplasmic reticulum compartment and may be targeted to the cell surface upon phosphorylation or other activation signals yet to be elucidated. This Rattus norvegicus (Rat) protein is Potassium channel subfamily K member 12 (Kcnk12).